The chain runs to 513 residues: PTADAIAAKKMENGKAAIDFPDQSVIRRVSSADRISLQDIARERVDVICDRMHRLPDEFLDELKNGLRAILEGGNGSQHRDEFFILQKLVQSRSDLTAKTLIRAHRVQLEILVSINTGIQGFLHPSISLSQTSLIEIFLYKRCRNIACQNQLPADECSXDTCTNNNGFCNLCMCVICSKFDFEVNTCRWIGCDLXSHWTHTDCAIREQLICMGPSVKSGSGPSEMVFRCQACSXTSXLLGWVKDVFQHCAPSWDGDALIRELDFVSRIFHGSKDQRGMNLFWKCDDLKEKLKSRKMDSKAACRAILMVFQELDLDNSKSLENAESGRLIAPQEACNRIAEVVQEAIRKMEFVADEKMRMFKKARIAVEACDRELADKAREAGDLKVERQKKKSQIEELERIVRLKNAEADMFQLKANEAKREAERLQRIALAKSDKSEEEYTSNYLKQKLSEAEAEKQYLYEKIKLQESSRLSQSSGDPSSMLMYSKIHDLLYNGPPKADSQSNDCHPFRTNP.

Residues 166 to 235 (NGFCNLCMCV…VFRCQACSXT (70 aa)) form a PHD-type zinc finger. Positions 372-469 (RELADKAREA…LYEKIKLQES (98 aa)) form a coiled coil. The tract at residues 493–513 (YNGPPKADSQSNDCHPFRTNP) is disordered. Positions 500-513 (DSQSNDCHPFRTNP) are enriched in polar residues.

In terms of assembly, self-interacts and probably forms heteromers. Binds to VPg of pea seed borne mosaic virus (PSbMV), turnip mosaic virus (TuMV) and lettuce mosaic virus (LMV), but not with VPg of tobacco etch virus (TEV), cowpea mosaic virus (CPMV), tomato black ring virus (TBRV) and grapevine fan leaf virus (GFLV).

It is found in the nucleus. Its function is as follows. Required for the maintenance and/or establishment of both the shoot and root meristems, probably by controlling the expression of the meristem genes and of genes required for auxin responses. Involved in the development of the basal pole and in auxin-mediated root and vascular development in the embryo. Confers sensitivity to turnip mosaic virus (TuMV) probably by promoting viral movement and multiplication via interaction with TuMV VPg. In Pisum sativum (Garden pea), this protein is OBERON-like protein (PVIP).